A 604-amino-acid polypeptide reads, in one-letter code: Threonine--tRNA ligase (604 aa).

The segment at 197-499 is catalytic; sequence DHRKLGRELG…LIEEYAGDFP (303 aa). 3 residues coordinate Zn(2+): cysteine 296, histidine 347, and histidine 476.

This sequence belongs to the class-II aminoacyl-tRNA synthetase family. In terms of assembly, homodimer. It depends on Zn(2+) as a cofactor.

The protein localises to the cytoplasm. The catalysed reaction is tRNA(Thr) + L-threonine + ATP = L-threonyl-tRNA(Thr) + AMP + diphosphate + H(+). Catalyzes the attachment of threonine to tRNA(Thr) in a two-step reaction: L-threonine is first activated by ATP to form Thr-AMP and then transferred to the acceptor end of tRNA(Thr). Also edits incorrectly charged L-seryl-tRNA(Thr). The polypeptide is Threonine--tRNA ligase (Synechococcus elongatus (strain ATCC 33912 / PCC 7942 / FACHB-805) (Anacystis nidulans R2)).